Here is a 466-residue protein sequence, read N- to C-terminus: Ornithine decarboxylase (466 aa).

Position 116 is an N6-(pyridoxal phosphate)lysine (lysine 116). Residues serine 247, glycine 286, and 318–321 (EPGR) each bind pyridoxal 5'-phosphate. Residue 362–363 (FD) coordinates substrate. The active-site Proton donor; shared with dimeric partner is the cysteine 411. Residue aspartate 412 coordinates substrate. Tyrosine 441 is a pyridoxal 5'-phosphate binding site.

This sequence belongs to the Orn/Lys/Arg decarboxylase class-II family. Homodimer. Only the dimer is catalytically active, as the active sites are constructed of residues from both monomers. Requires pyridoxal 5'-phosphate as cofactor.

The protein resides in the cytoplasm. It catalyses the reaction L-ornithine + H(+) = putrescine + CO2. The protein operates within amine and polyamine biosynthesis; putrescine biosynthesis via L-ornithine pathway; putrescine from L-ornithine: step 1/1. Its activity is regulated as follows. Inhibited by antizyme (AZ) OAZ1 in response to polyamine levels. AZ inhibits the assembly of the functional homodimer by binding to ODC monomers and targeting them for ubiquitin-independent proteolytic destruction by the 26S proteasome. In terms of biological role, catalyzes the first and rate-limiting step of polyamine biosynthesis that converts ornithine into putrescine, which is the precursor for the polyamines, spermidine and spermine. Polyamines are essential for cell proliferation and are implicated in cellular processes, ranging from DNA replication to apoptosis. The sequence is that of Ornithine decarboxylase from Saccharomyces cerevisiae (strain ATCC 204508 / S288c) (Baker's yeast).